Here is a 336-residue protein sequence, read N- to C-terminus: MNREMLYLNRSDIEQAGGNHSQVYVDALTEALTAHAHNDFVQPLKPYLRQDPENGHIADRIIAMPSHIGGEHAISGIKWIGSKHDNPSKRNMERASGVIILNDPETNYPIAVMEASLISSMRTAAVSVIAAKHLAKKGFKDLTIIGCGLIGDKQLQSMLEQFDHIERVFVYDQFSEACARFVDRWQQQRPEINFIATENAKEAVSNGEVVITCTVTDQPYIEYDWLQKGAFISNISIMDVHKEVFIKADKVVVDDWSQCNREKKTINQLVLEGKFSKEALHAELGQLVTGDIPGREDDDEIILLNPMGMAIEDISSAYFIYQQAQQQNIGTTLNLY.

The Proton donor/acceptor role is filled by K78. R122 and K242 together coordinate NAD(+).

The protein belongs to the ornithine cyclodeaminase/mu-crystallin family. As to quaternary structure, homodimer.

The enzyme catalyses N-[(2S)-2-amino-2-carboxyethyl]-L-glutamate + NAD(+) + H2O = (S)-2,3-diaminopropanoate + 2-oxoglutarate + NADH + H(+). It functions in the pathway siderophore biosynthesis. Its function is as follows. Catalyzes the hydrolysis of N-((2S)-2-amino-2-carboxyethyl)-L-glutamate (ACEGA) to form L-2,3-diaminopropionic acid and 2-oxoglutarate. Involved in the biosynthesis of L-2,3-diaminopropionic acid (L-Dap), a precursor of staphyloferrin B and antibiotics. In Staphylococcus aureus (strain NCTC 8325 / PS 47), this protein is N-((2S)-2-amino-2-carboxyethyl)-L-glutamate dehydrogenase.